We begin with the raw amino-acid sequence, 211 residues long: Large ribosomal subunit protein uL3 (211 aa).

Residues 122 to 156 (NQKRNNFGRGPMSHGSKNHRAPGSIGAGTTPGRVY) form a disordered region.

It belongs to the universal ribosomal protein uL3 family. In terms of assembly, part of the 50S ribosomal subunit. Forms a cluster with proteins L14 and L19.

Functionally, one of the primary rRNA binding proteins, it binds directly near the 3'-end of the 23S rRNA, where it nucleates assembly of the 50S subunit. The polypeptide is Large ribosomal subunit protein uL3 (Nostoc sp. (strain PCC 7120 / SAG 25.82 / UTEX 2576)).